Here is a 569-residue protein sequence, read N- to C-terminus: Proline--tRNA ligase (569 aa).

The protein belongs to the class-II aminoacyl-tRNA synthetase family. ProS type 1 subfamily. Homodimer.

Its subcellular location is the cytoplasm. The enzyme catalyses tRNA(Pro) + L-proline + ATP = L-prolyl-tRNA(Pro) + AMP + diphosphate. Functionally, catalyzes the attachment of proline to tRNA(Pro) in a two-step reaction: proline is first activated by ATP to form Pro-AMP and then transferred to the acceptor end of tRNA(Pro). As ProRS can inadvertently accommodate and process non-cognate amino acids such as alanine and cysteine, to avoid such errors it has two additional distinct editing activities against alanine. One activity is designated as 'pretransfer' editing and involves the tRNA(Pro)-independent hydrolysis of activated Ala-AMP. The other activity is designated 'posttransfer' editing and involves deacylation of mischarged Ala-tRNA(Pro). The misacylated Cys-tRNA(Pro) is not edited by ProRS. The chain is Proline--tRNA ligase from Endomicrobium trichonymphae.